The primary structure comprises 700 residues: AP-1-like transcription factor yap1 (700 aa).

2 disordered regions span residues 17 to 185 (SPGH…KDLE) and 228 to 296 (MPVN…VSLR). Residues 34 to 41 (MPVPGRDT) carry the Bipartite nuclear localization signal motif. Over residues 47-59 (PSVSNGSQPSAHQ) the composition is skewed to polar residues. A Bipartite nuclear localization signal motif is present at residues 67-74 (SPTPEMPP). A compositionally biased stretch (acidic residues) spans 103 to 112 (LDDDDDDASD). Positions 127–138 (AGRAAAASASGS) are enriched in low complexity. Positions 150–185 (GDGKRELSKSERRKEQNRAAQKAFRERREAKVKDLE) are enriched in basic and acidic residues. The region spanning 156–219 (LSKSERRKEQ…KRLQEENVAL (64 aa)) is the bZIP domain. Positions 158 to 182 (KSERRKEQNRAAQKAFRERREAKVK) are basic motif. The interval 184–191 (LEDKVAEL) is leucine-zipper. Transcription activation regions lie at residues 213–400 (QEEN…QPDS) and 452–577 (LGAT…GRGN). Residues 231-244 (NSRNSPNSNNGSFS) are compositionally biased toward low complexity. Polar residues predominate over residues 280–296 (SANTISDNSSESLVSLR). A n-CRD region spans residues 306-318 (FSDHFNTYALGVV). Disordered stretches follow at residues 320–359 (VPPP…PSAD) and 542–609 (NYLN…KATT). Low complexity-rich tracts occupy residues 335–358 (SASN…PPSA) and 542–573 (NYLN…NVSS). Residues 589 to 607 (MGSSRTSVSHDSTDLQGKA) show a composition bias toward polar residues. Residues 642-675 (PSELWMRFGMQHENSTEHLLIDDLCDQMRAKATC) are c-CRD. A Nuclear export signal motif is present at residues 660 to 667 (LLIDDLCD). Cys666 and Cys675 are oxidised to a cystine.

Belongs to the bZIP family. YAP subfamily. Post-translationally, depending on the oxidative stress inducing agent, yap1 can undergo two distinct conformational changes, both involving disulfide bond formation, and both masking the nuclear export signal, thus abolishing nuclear export.

Its subcellular location is the nucleus. The protein resides in the cytoplasm. Transcription activator involved in oxidative stress response and redox homeostasis. Regulates the transcription of genes encoding antioxidant enzymes and components of the cellular thiol-reducing pathways. Involved in antifungal resistance to fluconazole. The polypeptide is AP-1-like transcription factor yap1 (Cryptococcus neoformans var. grubii serotype A (strain H99 / ATCC 208821 / CBS 10515 / FGSC 9487) (Filobasidiella neoformans var. grubii)).